Reading from the N-terminus, the 112-residue chain is NADH-quinone oxidoreductase subunit K (112 aa).

A run of 3 helical transmembrane segments spans residues 14 to 34 (LEGYLTVAAIMFAIGAWGALI), 39 to 59 (VVVFMCVELMINAVNLTLVAF), and 76 to 96 (LIIAIAAAEVAVGLAIVLAIF).

The protein belongs to the complex I subunit 4L family. As to quaternary structure, NDH-1 is composed of 14 different subunits. Subunits NuoA, H, J, K, L, M, N constitute the membrane sector of the complex.

Its subcellular location is the cell membrane. It carries out the reaction a quinone + NADH + 5 H(+)(in) = a quinol + NAD(+) + 4 H(+)(out). Its function is as follows. NDH-1 shuttles electrons from NADH, via FMN and iron-sulfur (Fe-S) centers, to quinones in the respiratory chain. The immediate electron acceptor for the enzyme in this species is believed to be a menaquinone. Couples the redox reaction to proton translocation (for every two electrons transferred, four hydrogen ions are translocated across the cytoplasmic membrane), and thus conserves the redox energy in a proton gradient. This Rubrobacter xylanophilus (strain DSM 9941 / JCM 11954 / NBRC 16129 / PRD-1) protein is NADH-quinone oxidoreductase subunit K.